The primary structure comprises 77 residues: Acyl carrier protein (77 aa).

Residues 2 to 77 form the Carrier domain; it reads SNIEERVKKI…AAIDYVSKNQ (76 aa). Serine 37 carries the post-translational modification O-(pantetheine 4'-phosphoryl)serine.

It belongs to the acyl carrier protein (ACP) family. Post-translationally, 4'-phosphopantetheine is transferred from CoA to a specific serine of apo-ACP by AcpS. This modification is essential for activity because fatty acids are bound in thioester linkage to the sulfhydryl of the prosthetic group.

The protein localises to the cytoplasm. It functions in the pathway lipid metabolism; fatty acid biosynthesis. In terms of biological role, carrier of the growing fatty acid chain in fatty acid biosynthesis. The sequence is that of Acyl carrier protein from Shewanella oneidensis (strain ATCC 700550 / JCM 31522 / CIP 106686 / LMG 19005 / NCIMB 14063 / MR-1).